The primary structure comprises 408 residues: Subtilisin-like protease 6 (408 aa).

The signal sequence occupies residues 1 to 20 (MGFITKAIPIVLAALSTVDG). A propeptide spanning residues 21 to 123 (AKILEAGPHA…RDTVVKATAI (103 aa)) is cleaved from the precursor. The region spanning 36–119 (KYIVVMKQDV…DFIERDTVVK (84 aa)) is the Inhibitor I9 domain. In terms of domain architecture, Peptidase S8 spans 131-408 (SWGLARVGSK…GKLIYNGSGK (278 aa)). Catalysis depends on charge relay system residues D163 and H194. N-linked (GlcNAc...) asparagine glycosylation is found at N248, N260, and N345. S354 serves as the catalytic Charge relay system. N-linked (GlcNAc...) asparagine glycosylation occurs at N404.

The protein belongs to the peptidase S8 family.

It is found in the secreted. Its function is as follows. Secreted subtilisin-like serine protease with keratinolytic activity that contributes to pathogenicity. This is Subtilisin-like protease 6 (SUB6) from Arthroderma gypseum (strain ATCC MYA-4604 / CBS 118893) (Microsporum gypseum).